We begin with the raw amino-acid sequence, 310 residues long: Glycine-rich RNA-binding protein RZ1C (310 aa).

The 79-residue stretch at 7–85 (SRIFVGGLSP…RVISVNRAEP (79 aa)) folds into the RRM domain. Phosphoserine is present on serine 15. The segment at 82-120 (RAEPKLGRDDGESHGSRGGRDSGYSIAGKGSFGGGGGGG) is disordered. A compositionally biased stretch (basic and acidic residues) spans 83–101 (AEPKLGRDDGESHGSRGGR). Gly residues predominate over residues 111–120 (GSFGGGGGGG). The segment at 128-143 (CFKCGRVGHWARDCPS) adopts a CCHC-type zinc-finger fold. Positions 224-310 (RFAGGDRYSR…YPSSSTFDRY (87 aa)) are disordered. 2 stretches are compositionally biased toward basic and acidic residues: residues 226-236 (AGGDRYSRGSD) and 244-253 (DKARSFERDI). The span at 261–273 (RYGGGRAGGPIRG) shows a compositional bias: gly residues. A Phosphoserine modification is found at serine 295.

In terms of tissue distribution, expressed in roots, rosette and cauline leaves, stems, floral buds and flowers.

The protein localises to the nucleus. In terms of biological role, binds RNA and DNA sequences non-specifically. May be involved in tolerance to cold stress. This is Glycine-rich RNA-binding protein RZ1C from Arabidopsis thaliana (Mouse-ear cress).